The sequence spans 101 residues: Feather keratin Cos2-2 (101 aa).

At S2 the chain carries N-acetylserine.

Belongs to the avian keratin family. The avian keratins (F-ker, S-ker, C-ker and B-ker) are a complex mixture of very similar polypeptides.

The sequence is that of Feather keratin Cos2-2 from Columba livia (Rock dove).